Reading from the N-terminus, the 610-residue chain is Glutamine--fructose-6-phosphate aminotransferase [isomerizing] (610 aa).

Cys2 acts as the Nucleophile; for GATase activity in catalysis. The Glutamine amidotransferase type-2 domain maps to 2–218 (CGIVGAVAQR…EGDVAEITRR (217 aa)). SIS domains are found at residues 286–426 (AADI…EQGR) and 459–600 (LATD…VDQP). Lys605 (for Fru-6P isomerization activity) is an active-site residue.

As to quaternary structure, homodimer.

Its subcellular location is the cytoplasm. The enzyme catalyses D-fructose 6-phosphate + L-glutamine = D-glucosamine 6-phosphate + L-glutamate. In terms of biological role, catalyzes the first step in hexosamine metabolism, converting fructose-6P into glucosamine-6P using glutamine as a nitrogen source. The polypeptide is Glutamine--fructose-6-phosphate aminotransferase [isomerizing] (Vibrio parahaemolyticus serotype O3:K6 (strain RIMD 2210633)).